The primary structure comprises 218 residues: Ribose-5-phosphate isomerase A (218 aa).

Substrate-binding positions include 28–31 (TGST), 81–84 (DGAD), and 94–97 (KGGG). E103 serves as the catalytic Proton acceptor. Residue K121 participates in substrate binding.

This sequence belongs to the ribose 5-phosphate isomerase family. Homodimer.

The catalysed reaction is aldehydo-D-ribose 5-phosphate = D-ribulose 5-phosphate. It functions in the pathway carbohydrate degradation; pentose phosphate pathway; D-ribose 5-phosphate from D-ribulose 5-phosphate (non-oxidative stage): step 1/1. Its function is as follows. Catalyzes the reversible conversion of ribose-5-phosphate to ribulose 5-phosphate. The polypeptide is Ribose-5-phosphate isomerase A (Proteus mirabilis (strain HI4320)).